The following is a 419-amino-acid chain: Histidine--tRNA ligase (419 aa).

This sequence belongs to the class-II aminoacyl-tRNA synthetase family. Homodimer.

Its subcellular location is the cytoplasm. The enzyme catalyses tRNA(His) + L-histidine + ATP = L-histidyl-tRNA(His) + AMP + diphosphate + H(+). This chain is Histidine--tRNA ligase, found in Mycoplasmoides gallisepticum (strain R(low / passage 15 / clone 2)) (Mycoplasma gallisepticum).